A 54-amino-acid polypeptide reads, in one-letter code: UPF0391 membrane protein RC1_1636 (54 aa).

2 helical membrane-spanning segments follow: residues 3 to 23 and 30 to 50; these read YWALIFFVVALVAGVLGFGGI and IAQILFFIFLVIFVVSLIMGL.

This sequence belongs to the UPF0391 family.

The protein resides in the cell membrane. The polypeptide is UPF0391 membrane protein RC1_1636 (Rhodospirillum centenum (strain ATCC 51521 / SW)).